Reading from the N-terminus, the 593-residue chain is MVLLPSMTSLLLVFLFLYGVSPVISDGSDHRYKVGDDVPLYANKVGPFHNPSETYRYFDLPFCSSAPVKEKKEALGEVLNGDRLVSAPYKLEFLGEKNSEVACRKRLSREDVAKFRDVIAKDYYFQMYYDDLPIWGFLGKVVKEGKTDPSEYKYYLFNHLQFEIFYNKDRVIEIIVRTDQNFLVDLTEDKEVQVDFTYTVRWKETEIPFEKRMEKYSLASSMPHHLEIHWFSIINSCVTVLLLTGFLATILMRVLKNDFVKYAHDEEAVDDQEETGWKLIHGDVFRFPKHKSLLAAALGSGTQLFTLAVFIFMLALVGVFYPYNRGALFTALVVIYALTSGIAGYTAASFYCQLEGTNWVRNVILTGSLFCGPLLITFSFLNTVAIAYQATAALPFGTIVVIFLIWALVTSPLLILGGIAGKNRKSEFQAPCRTTKYPREIPPMRWYRRTLPQMAMAGFLPFSAIYIELYYIFASVWGHRIYTIYSILSIVFLILVIVTAFITVALTYFQLAAEDHEWWWRSLLCGGSTGLFIYAYCLYYYYARSDMSGFMQTSFFFGYMACICYGFFLMLGTIGFCASLLFVRHIYRSIKCE.

The first 25 residues, methionine 1–serine 25, serve as a signal peptide directing secretion. Residues aspartate 26 to tryptophan 230 lie on the Lumenal side of the membrane. Residues phenylalanine 231–leucine 251 traverse the membrane as a helical segment. At methionine 252–glutamine 303 the chain is on the cytoplasmic side. The helical transmembrane segment at leucine 304–asparagine 324 threads the bilayer. Residues arginine 325–glycine 326 are Lumenal-facing. Residues alanine 327–alanine 347 traverse the membrane as a helical segment. Residues alanine 348 to threonine 366 lie on the Cytoplasmic side of the membrane. A helical membrane pass occupies residues glycine 367–alanine 387. Over tyrosine 388–threonine 398 the chain is Lumenal. A helical transmembrane segment spans residues isoleucine 399–isoleucine 419. The Cytoplasmic portion of the chain corresponds to alanine 420–glutamine 453. Residues methionine 454 to alanine 474 form a helical membrane-spanning segment. The Lumenal portion of the chain corresponds to serine 475–serine 486. The helical transmembrane segment at isoleucine 487–threonine 507 threads the bilayer. The Cytoplasmic portion of the chain corresponds to tyrosine 508–serine 522. The helical transmembrane segment at leucine 523–alanine 543 threads the bilayer. The Lumenal segment spans residues arginine 544–serine 554. A helical membrane pass occupies residues phenylalanine 555 to glycine 575. At phenylalanine 576–glutamate 593 the chain is on the cytoplasmic side. Positions phenylalanine 582–tyrosine 587 match the Endoplasmic reticulum export signal motif. The Golgi retention signal signature appears at lysine 591 to glutamate 593.

Belongs to the nonaspanin (TM9SF) (TC 9.A.2) family.

It localises to the endosome membrane. It is found in the golgi apparatus membrane. This chain is Transmembrane 9 superfamily member 4, found in Arabidopsis thaliana (Mouse-ear cress).